The sequence spans 3567 residues: Sushi, von Willebrand factor type A, EGF and pentraxin domain-containing protein 1 (3567 aa).

An N-terminal signal peptide occupies residues 1–17; that stretch reads MWSRLAFCCWALALVSG. In terms of domain architecture, VWFA spans 84–265; the sequence is ELVFLVDESS…LARRALHEDL (182 aa). A glycan (N-linked (GlcNAc...) asparagine) is linked at Asn187. Sushi domains lie at 377–436, 437–496, and 497–561; these read VHCP…FCRV, RTCP…RCVE, and RHCA…VCKD. 6 disulfide bridges follow: Cys379-Cys421, Cys407-Cys434, Cys439-Cys481, Cys467-Cys494, Cys499-Cys544, and Cys530-Cys559. 2 HYR domains span residues 560 to 644 and 645 to 724; these read KDVE…KVID and VEPP…VIKG. The 65-residue stretch at 725–789 folds into the Sushi 4 domain; it reads SPCEVPFTPV…YSTEWPDCAI (65 aa). 20 disulfide bridges follow: Cys727–Cys769, Cys753–Cys787, Cys1196–Cys1207, Cys1201–Cys1216, Cys1218–Cys1227, Cys1234–Cys1245, Cys1239–Cys1254, Cys1256–Cys1265, Cys1272–Cys1283, Cys1277–Cys1292, Cys1294–Cys1303, Cys1310–Cys1321, Cys1315–Cys1330, Cys1332–Cys1341, Cys1348–Cys1359, Cys1353–Cys1368, Cys1370–Cys1379, Cys1386–Cys1397, Cys1391–Cys1406, and Cys1408–Cys1417. The EGF-like 1 domain maps to 1192-1228; the sequence is VFHECFLNPCHNSGTCQQLGRGYVCLCPPGYTGLKCE. The EGF-like 2; calcium-binding domain occupies 1230 to 1266; it reads DIDECSSLPCLNGGICRDQVGGFTCECSLGYSGQICE. The 37-residue stretch at 1268 to 1304 folds into the EGF-like 3; calcium-binding domain; it reads NINECISSPCLNKGTCTDGLASYRCTCVKGYMGVHCE. Residues 1306–1342 enclose the EGF-like 4; calcium-binding domain; that stretch reads DVNECQSSPCLNNAVCKDQVGGFSCKCPPGFLGTRCE. Residues 1344 to 1380 enclose the EGF-like 5; calcium-binding domain; it reads NVDECLSQPCQNGATCKDGANSFRCQCPAGFTGTHCE. The EGF-like 6; calcium-binding domain maps to 1382–1418; that stretch reads NINECQSNPCRNQATCVDELNSYSCKCQPGFSGHRCE. The 205-residue stretch at 1423–1627 folds into the Pentraxin (PTX) domain; it reads SGFNLDFEVS…VKVDSSSMFC (205 aa). Sushi domains lie at 1628 to 1686 and 1687 to 1744; these read SDCP…HCER and IRCG…SCLD. Intrachain disulfides connect Cys1630-Cys1671, Cys1657-Cys1684, Cys1689-Cys1729, Cys1715-Cys1742, Cys1748-Cys1760, Cys1754-Cys1769, Cys1771-Cys1782, Cys1788-Cys1828, Cys1814-Cys1841, Cys1846-Cys1886, Cys1872-Cys1899, Cys1904-Cys1944, Cys1930-Cys1957, Cys1962-Cys2002, Cys1988-Cys2015, Cys2020-Cys2060, Cys2046-Cys2077, Cys2082-Cys2125, Cys2111-Cys2140, Cys2145-Cys2185, Cys2171-Cys2198, Cys2203-Cys2244, Cys2230-Cys2258, Cys2263-Cys2303, Cys2289-Cys2317, Cys2322-Cys2362, Cys2348-Cys2375, Cys2380-Cys2421, Cys2407-Cys2434, Cys2439-Cys2479, Cys2465-Cys2492, Cys2497-Cys2537, Cys2523-Cys2550, Cys2555-Cys2595, and Cys2581-Cys2607. The EGF-like 7; calcium-binding domain occupies 1744-1783; the sequence is DVDECAVGSDCSEHASCLNTNGSYVCSCNPPYTGDGKNCA. 14 consecutive Sushi domains span residues 1780–1843, 1844–1901, 1902–1959, 1960–2017, 2018–2079, 2080–2142, 2143–2200, 2201–2260, 2261–2319, 2320–2377, 2378–2436, 2437–2494, 2495–2552, and 2553–2609; these read KNCA…SCEA, ISCG…VCEL, VKCS…SCQL, VSCG…QCLA, VSCD…RCIA, HFCE…QCIP, VRCG…TCHP, VSCN…SCTP, LNCG…KCVP, TKCA…ICKM, VLCP…ECVP, VECP…MCKP, IECP…SCDA, and IHCS…TCVP. Residues 2638–2645 are important for the interaction with integrin ITGA9:ITGB1; it reads DMMEVPYL. 14 Sushi domains span residues 2660–2711, 2712–2769, 2770–2827, 2828–2885, 2886–2943, 2944–3001, 3002–3057, 3058–3115, 3116–3174, 3175–3234, 3235–3292, 3293–3350, 3351–3409, and 3410–3466; these read NTKE…SCIS, IECD…RCEA, ISCS…MCIP, VDCG…SCMP, VRCP…VCKP, ATCG…SCLP, CRCS…LCEH, AQCG…TCEP, LSCG…TCSP, KKCP…SCIP, VVCG…VCRE, NRCE…LCKP, NPCP…RCEK, and ISCG…VCRA. Intrachain disulfides connect Cys2682–Cys2709, Cys2714–Cys2754, Cys2740–Cys2767, Cys2772–Cys2812, Cys2798–Cys2825, Cys2830–Cys2870, Cys2856–Cys2883, Cys2888–Cys2928, Cys2914–Cys2941, Cys2946–Cys2986, Cys2972–Cys2999, Cys3004–Cys3043, Cys3029–Cys3055, Cys3060–Cys3100, Cys3086–Cys3113, Cys3118–Cys3159, Cys3144–Cys3172, Cys3177–Cys3217, Cys3203–Cys3232, Cys3237–Cys3277, Cys3263–Cys3290, Cys3295–Cys3335, Cys3321–Cys3348, Cys3353–Cys3394, Cys3380–Cys3407, Cys3412–Cys3452, Cys3438–Cys3464, Cys3500–Cys3510, Cys3504–Cys3516, Cys3518–Cys3527, Cys3532–Cys3542, Cys3536–Cys3548, and Cys3550–Cys3559. EGF-like domains lie at 3496–3528 and 3529–3560; these read EEPICILPCLNGGRCVAPYQCDCPTGWTGSRCH and TATCQSPCLNGGKCIRPNRCHCLSAWTGHDCS.

Interacts (via Sushi domain 21) with ITGA9:ITGB1; thereby inhibits Ca(2+) intracellular signaling and as a result represses vasocontraction. Interacts (via Sushi domain 21) with ITGA4:ITGB1; thereby inhibits Ca(2+) intracellular signaling and as a result represses vasocontraction. Interacts with ANGPT1 and ANGPT2. Interacts with PEAR1 (via extracellular domain). Interacts with HSPG2, TLN1, FN1, COPA, CCT2, IQGAP1, LAMC1 and NID1. Interacts (via C-terminus) with TIE1. As to expression, expressed in the media layer of the arterial wall (at protein level). Highly expressed in lung and placenta, weakly expressed in the kidney, heart, brain and spleen. Also expressed in bone and periosteum, but not in cartilage and skeletal muscle.

The protein resides in the secreted. Its subcellular location is the nucleus. It is found in the cytoplasm. It localises to the membrane. Required for morphological development, cell alignment and migration of lymphatic endothelial cells during embryonic development, potentially via modulation of ANGPT2-TIE1 signaling and subsequent activation of FOXC2 transcription. Required for embryonic lymphatic vascular development, via mediating the correct formation of the first lymphovenous contact site and tight association of the lymphatic endothelium with the venous endothelium. Represses PRKCA-mediated L-type voltage-gated channel Ca(2+) influx and ROCK-mediated calcium sensitivity in vascular smooth muscle cells, via its interaction with integrins, thereby inhibiting vasocontraction. Promotes platelet activation, via its interaction with PEAR1 and subsequent activation of AKT/mTOR signaling. Plays a role in epidermal development and keratinocyte differentiation, independent of cell-cell adhesion. May play a role in initial cell attachment of stromal osteogenic cells. May promote myoblast cell adhesion when in the presence of integrin ITGA9:ITGB1. The sequence is that of Sushi, von Willebrand factor type A, EGF and pentraxin domain-containing protein 1 (Svep1) from Mus musculus (Mouse).